The primary structure comprises 525 residues: GMP synthase [glutamine-hydrolyzing] (525 aa).

Positions 9-202 (SILIIDFGSQ…VHKIVGLKSD (194 aa)) constitute a Glutamine amidotransferase type-1 domain. Cys86 acts as the Nucleophile in catalysis. Active-site residues include His176 and Glu178. A GMPS ATP-PPase domain is found at 203–400 (WTMAAYRAEM…LGLPESFIGR (198 aa)). An ATP-binding site is contributed by 230-236 (SGGVDSS).

As to quaternary structure, homodimer.

The catalysed reaction is XMP + L-glutamine + ATP + H2O = GMP + L-glutamate + AMP + diphosphate + 2 H(+). Its pathway is purine metabolism; GMP biosynthesis; GMP from XMP (L-Gln route): step 1/1. Its function is as follows. Catalyzes the synthesis of GMP from XMP. The sequence is that of GMP synthase [glutamine-hydrolyzing] from Agrobacterium fabrum (strain C58 / ATCC 33970) (Agrobacterium tumefaciens (strain C58)).